The following is a 248-amino-acid chain: ATP synthase subunit a, chloroplastic (248 aa).

5 helical membrane passes run 38-58, 96-116, 135-155, 200-220, and 221-241; these read QVLI…AIAV, VPFI…GALL, INTT…AGLT, LVVV…VMFL, and GLFT…AYIG.

It belongs to the ATPase A chain family. In terms of assembly, F-type ATPases have 2 components, CF(1) - the catalytic core - and CF(0) - the membrane proton channel. CF(1) has five subunits: alpha(3), beta(3), gamma(1), delta(1), epsilon(1). CF(0) has four main subunits: a, b, b' and c.

It localises to the plastid. The protein localises to the chloroplast thylakoid membrane. Its function is as follows. Key component of the proton channel; it plays a direct role in the translocation of protons across the membrane. The chain is ATP synthase subunit a, chloroplastic from Nuphar advena (Common spatterdock).